The following is a 356-amino-acid chain: Glucan endo-1,3-beta-glucosidase, acidic isoform GL153 (356 aa).

A signal peptide spans 1 to 29; it reads MALCIKNGFLAAALVLVGLLMCSIQMIGA. Pyrrolidone carboxylic acid is present on glutamine 30. Asparagine 95 is a glycosylation site (N-linked (GlcNAc...) asparagine). The Proton donor role is filled by glutamate 124. The active-site Nucleophile is the glutamate 264.

The protein belongs to the glycosyl hydrolase 17 family. As to expression, is expressed primarily in epidermal cell of healthy plant, and following induction by ethylene, accumulates in mesophyll cells.

Its subcellular location is the secreted. The protein resides in the extracellular space. It catalyses the reaction Hydrolysis of (1-&gt;3)-beta-D-glucosidic linkages in (1-&gt;3)-beta-D-glucans.. Is thought to be an important plant defense-related product against fungal pathogens. The protein is Glucan endo-1,3-beta-glucosidase, acidic isoform GL153 (GGL4) of Nicotiana tabacum (Common tobacco).